The chain runs to 373 residues: Spore germination protein KB (373 aa).

Transmembrane regions (helical) follow at residues Leu11–Met31, Trp37–Ile57, Leu78–Leu98, Leu105–Val125, Leu143–Gly163, Val185–Pro205, Ile219–Leu239, Val269–Ala289, Leu306–Ser326, and Leu338–Trp358.

Belongs to the amino acid-polyamine-organocation (APC) superfamily. Spore germination protein (SGP) (TC 2.A.3.9) family.

It localises to the cell membrane. Its function is as follows. Involved in the germination response to the combination of glucose, fructose, L-asparagine, and KCl. This is Spore germination protein KB (gerKB) from Bacillus subtilis (strain 168).